We begin with the raw amino-acid sequence, 345 residues long: Ubiquitin-associated domain-containing protein 2 (345 aa).

The N-terminal stretch at 1 to 39 (MFTSTGSSGLYKAPLSKSLLLVPSALSLLLTLLLPHCQK) is a signal peptide. Topologically, residues 40 to 91 (FFVYDLHAVKHDLQIWRLICGRIICLDLKDAFCSGLLIYNFRIFERRYGSRK) are extracellular. The helical transmembrane segment at 92–112 (FASFLLGSWVLSALFDFILVE) threads the bilayer. The Cytoplasmic segment spans residues 113 to 125 (AVQYSLGVTVASN). The helical transmembrane segment at 126–146 (LPSGFLAPVFALFVPFHCSIP) threads the bilayer. The Extracellular segment spans residues 147 to 163 (RVQVAQILGPLSITNKT). Asparagine 161 carries N-linked (GlcNAc...) asparagine glycosylation. A helical transmembrane segment spans residues 164 to 184 (LIYILGLQLFTSGSYIWIVAM). Over 185–345 (SGLISGMCYD…NVATNFLLQH (161 aa)) the chain is Cytoplasmic. The disordered stretch occupies residues 287 to 306 (NINYQDGPRSEQRASPPLEV). Residues 305–345 (EVSEEQVARLMEMGFSRGDALEALRASNNDLNVATNFLLQH) enclose the UBA domain.

Interacts with LMBR1L, FAF2, AMFR and VCP.

It is found in the endoplasmic reticulum membrane. Functionally, restricts trafficking of FAF2 from the endoplasmic reticulum to lipid droplets. In association with LMBR1L and E3 ubiquitin-protein ligase AMFR, negatively regulates the canonical Wnt signaling pathway in the lymphocytes by promoting the ubiquitin-mediated degradation of CTNNB1 and Wnt receptors FZD6 and LRP6. The polypeptide is Ubiquitin-associated domain-containing protein 2 (Ubac2) (Mus musculus (Mouse)).